A 569-amino-acid polypeptide reads, in one-letter code: Hexose transporter HXT8 (569 aa).

Residues 1–38 (MTDRKTNLPEEPIFEEAEDDGCPSIENSSHLSVPTVEE) form a disordered region. Residues 1–61 (MTDRKTNLPE…EVVVPEKPAS (61 aa)) lie on the Cytoplasmic side of the membrane. Residues 12-21 (PIFEEAEDDG) show a composition bias toward acidic residues. Residues 62 to 82 (AYATVSIMCLCMAFGGFMSGW) traverse the membrane as a helical segment. At 83-118 (DTGTISGFVNQTDFLRRFGNYSHSKNTYYLSNVRTG) the chain is on the extracellular side. Residues Asn-92 and Asn-102 are each glycosylated (N-linked (GlcNAc...) asparagine). The helical transmembrane segment at 119–139 (LIVSIFNVGSAIGCLFLSKLG) threads the bilayer. At 140-145 (DIYGRC) the chain is on the cytoplasmic side. A helical membrane pass occupies residues 146–166 (MGLIIVIVVYMVGIVIQIASI). Over 167 to 176 (DKWYQYFIGR) the chain is Extracellular. A helical transmembrane segment spans residues 177–197 (IIAGIGAGSISVLAPMLISET). Over 198 to 203 (APKHIR) the chain is Cytoplasmic. Residues 204-224 (GTLLACWQLMVTFAIFLGYCT) traverse the membrane as a helical segment. Topologically, residues 225–238 (NYGTKTYSNSVQWR) are extracellular. The chain crosses the membrane as a helical span at residues 239 to 259 (VPLGLCFAWAIIMIGGMTFVP). Residues 260 to 342 (ESPRFLVQVG…INSLQQLTGD (83 aa)) lie on the Cytoplasmic side of the membrane. Residues 343–359 (NYFFYYGTTIFKSVGMN) form a helical membrane-spanning segment. Over 360–365 (DSFETS) the chain is Extracellular. The helical transmembrane segment at 366-383 (IVLGIVNFASCFFSLYSV) threads the bilayer. Topologically, residues 384–390 (DKLGRRR) are cytoplasmic. The chain crosses the membrane as a helical span at residues 391-411 (CLLLGAATMTACMVIYASVGV). Residues 412–433 (TRLYPNGKSEPSSKGAGNCTIV) lie on the Extracellular side of the membrane. Asn-429 is a glycosylation site (N-linked (GlcNAc...) asparagine). A helical transmembrane segment spans residues 434–454 (FTCFYIFCFSCTWGPVCYVII). Residues 455-471 (SETFPLRVRSKCMSVAT) are Cytoplasmic-facing. The chain crosses the membrane as a helical span at residues 472–492 (AANLLWGFLIGFFTPFITSAI). Asn-493 is a topological domain (extracellular). The chain crosses the membrane as a helical span at residues 494-514 (FYYGYVFMGCLAFSYFYVFFF). The Cytoplasmic portion of the chain corresponds to 515–569 (VPETKGLTLEEVDEMWMDGVLPWKSESWVPASRRDGDYDNEKLQHDEKPFYKRMF).

The protein belongs to the major facilitator superfamily. Sugar transporter (TC 2.A.1.1) family.

Its subcellular location is the membrane. Its function is as follows. Probable glucose transporter. This Saccharomyces cerevisiae (strain ATCC 204508 / S288c) (Baker's yeast) protein is Hexose transporter HXT8 (HXT8).